We begin with the raw amino-acid sequence, 84 residues long: Large ribosomal subunit protein bL27 (84 aa).

The tract at residues 1–20 (MAHKKGGGSTKNGRDSNPKY) is disordered.

The protein belongs to the bacterial ribosomal protein bL27 family.

This chain is Large ribosomal subunit protein bL27, found in Chlorobaculum tepidum (strain ATCC 49652 / DSM 12025 / NBRC 103806 / TLS) (Chlorobium tepidum).